A 288-amino-acid polypeptide reads, in one-letter code: UPF0276 protein VP3015 (288 aa).

This sequence belongs to the UPF0276 family.

This chain is UPF0276 protein VP3015, found in Vibrio parahaemolyticus serotype O3:K6 (strain RIMD 2210633).